We begin with the raw amino-acid sequence, 969 residues long: Proprotein convertase subtilisin/kexin type 6 (969 aa).

The segment covering 1-16 has biased composition (pro residues); it reads MPPRAPPAPGPRPPPR. The interval 1 to 39 is disordered; sequence MPPRAPPAPGPRPPPRAAAATDTAAGAGGAGGAGGAGGP. The first 63 residues, 1–63, serve as a signal peptide directing secretion; the sequence is MPPRAPPAPG…LLALPAACSA (63 aa). A compositionally biased stretch (gly residues) spans 26–39; it reads GAGGAGGAGGAGGP. The propeptide occupies 64 to 149; the sequence is PPPRPVYTNH…QQEVKRRVKR (86 aa). In terms of domain architecture, Peptidase S8 spans 168–487; sequence MWYLHCGDKN…FGLVDAEALV (320 aa). Catalysis depends on charge relay system residues Asp205 and His246. Asn259 carries an N-linked (GlcNAc...) asparagine glycan. Ser420 serves as the catalytic Charge relay system. In terms of domain architecture, P/Homo B spans 495–635; that stretch reads AVPSQHMCVA…SLILYGTAEH (141 aa). The short motif at 553-555 is the Cell attachment site element; sequence RGD. The interval 658–683 is disordered; sequence EPPKAALSPSQVEVPEDEEDYTAQST. 5 FU repeats span residues 692 to 739, 743 to 790, 794 to 838, 842 to 887, and 895 to 943; these read TSVC…GYFG, ARRC…GFYA, QKNC…GTYF, LIRC…GFYP, and HKVC…ETFC. A CRM (Cys-rich motif) region spans residues 695–930; it reads CHPECGDKGC…GFTQLGTSCI (236 aa). N-linked (GlcNAc...) asparagine glycans are attached at residues Asn914 and Asn932. Residues 931–969 enclose the PLAC domain; that stretch reads TNHTCSNADETFCEMVKSNRLCERKLFIQFCCRTCLLAG.

This sequence belongs to the peptidase S8 family. As to quaternary structure, the PACE4A-I precursor protein seems to exist in the reticulum endoplasmic as both a monomer and a dimer-sized complex whereas mature PACE4A-I exists only as a monomer, suggesting that propeptide cleavage affects its tertiary or quaternary structure. Interacts (immature form including the propeptide) with RCN3; probably involved in the maturation and the secretion of PCSK6. It depends on Ca(2+) as a cofactor. Each PACE4 isoform exhibits a unique restricted distribution. Isoform PACE4A-I is expressed in heart, brain, placenta, lung, skeletal muscle, kidney, pancreas, but at comparatively higher levels in the liver. Isoform PACE4A-II is at least expressed in placenta. Isoform PACE4B was only found in the embryonic kidney cell line from which it was isolated. Isoform PACE4C and isoform PACE4D are expressed in placenta. Isoform PACE4E-I is expressed in cerebellum, placenta and pituitary. Isoform PACE4E-II is at least present in cerebellum.

The protein localises to the secreted. Its subcellular location is the endoplasmic reticulum. It is found in the endomembrane system. In terms of biological role, serine endoprotease that processes various proproteins by cleavage at paired basic amino acids, recognizing the RXXX[KR]R consensus motif. Likely functions in the constitutive secretory pathway, with unique restricted distribution in both neuroendocrine and non-neuroendocrine tissues. This Homo sapiens (Human) protein is Proprotein convertase subtilisin/kexin type 6 (PCSK6).